The primary structure comprises 256 residues: Putative bidirectional sugar transporter SWEET7e (256 aa).

At 1–9 (MVSPDLIRN) the chain is on the extracellular side. Residues 10 to 30 (VVGIVGNAISFGLFLSPVLTF) traverse the membrane as a helical segment. The region spanning 10 to 97 (VVGIVGNAIS…TIFFLFSNKK (88 aa)) is the MtN3/slv 1 domain. The Cytoplasmic segment spans residues 31–45 (WRIIKEKDMKYFKAD). A helical membrane pass occupies residues 46–66 (PYLATLLNCMLWVFYGLPIVH). The Extracellular segment spans residues 67–69 (PNS). A helical membrane pass occupies residues 70–90 (ILVVTINGIGLVIEAVYLTIF). Topologically, residues 91 to 100 (FLFSNKKNKK) are cytoplasmic. The chain crosses the membrane as a helical span at residues 101–121 (MGVVLATEALFMAAVALGVLL). Topologically, residues 122–130 (GAHTHQRRS) are extracellular. Residues 131–151 (LIVGILCVIFGTIMYSSPLTI) traverse the membrane as a helical segment. The region spanning 133–212 (VGILCVIFGT…LMQLILDKNQ (80 aa)) is the MtN3/slv 2 domain. Over 152-164 (MSQVVKTKSVEYM) the chain is Cytoplasmic. The chain crosses the membrane as a helical span at residues 165–185 (PLLLSVVSFLNGLCWTSYALI). Position 186 (R186) is a topological domain, extracellular. A helical membrane pass occupies residues 187-207 (FDIFITIPNGLGVLFTLMQLI). Topologically, residues 208–256 (LDKNQDKNLELPTVAPVAKETSIVTPVSKDDDINGSTASHVIINITKEP) are cytoplasmic.

It belongs to the SWEET sugar transporter family. In terms of assembly, forms homooligomers and/or heterooligomers.

It localises to the cell membrane. In terms of biological role, mediates both low-affinity uptake and efflux of sugar across the plasma membrane. The sequence is that of Putative bidirectional sugar transporter SWEET7e (SWEET7E) from Oryza sativa subsp. japonica (Rice).